The chain runs to 110 residues: Protein OPG154 (110 aa).

This sequence belongs to the orthopoxvirus OPG154 protein family. Homohexamers, covalently linked. Interacts with OPG144 and OPG153.

It localises to the virion. Functionally, structural protein involved in the envelopment of mature virion (MV) to form the wrapped virion (WV). The wrapping consists of the addition of Golgi membranes to the mature virion. Participates in mature virion (MV) movement within the infected cell. May play an indirect role in MV-cell fusion. This Homo sapiens (Human) protein is Protein OPG154 (OPG154).